Here is a 335-residue protein sequence, read N- to C-terminus: MAGRRSSNVCPFPGNSGGGLEGPVPMRVDTPTWLSSQAATSRLMVRPGMGPGFCPGPEVWGVPLGPSPYEFRGGIAPYGAYETRTWSQNSSEDTYPGPYIALRYMPNLALPEDVSAIQKEMEQLAKELRQKRMTLGYSQADVGFAVGAMFGKVLSQTTICRFEAQQLSLANMWKLRPLLKMWLEEVDEKNLLGICRMEMILQQARKRRRASRERRIGSNLEKLFLQCPEPTPQQISYIAGRLRLQKDLVQVWFSNRSQMAGWPTNDSSQRENVGATGAPFPGPPVCFPLAPGLHFDFPHYGGSCLTPLYSSTPFPVRGALLSAPTTTLGLPRLSS.

Residues 1-23 (MAGRRSSNVCPFPGNSGGGLEGP) are disordered. A POU-specific domain is found at 113–187 (DVSAIQKEME…LLKMWLEEVD (75 aa)). The homeobox DNA-binding region spans 205 to 264 (RKRRRASRERRIGSNLEKLFLQCPEPTPQQISYIAGRLRLQKDLVQVWFSNRSQMAGWPT).

The protein belongs to the POU transcription factor family. Class-5 subfamily. In terms of tissue distribution, highly restricted to adult testis.

Its subcellular location is the nucleus. Its function is as follows. Transcription factor that binds preferentially to the octamer motif (5'-ATGTTAAT-3'). May exert a regulatory function in meiotic events that are required for terminal differentiation of male germ cell. This chain is POU domain, class 5, transcription factor 2 (Pou5f2), found in Rattus norvegicus (Rat).